The sequence spans 396 residues: 8-amino-7-oxononanoate synthase (396 aa).

Residue R21 participates in substrate binding. Residue 108–109 (GY) coordinates pyridoxal 5'-phosphate. Substrate is bound at residue H133. Positions 179, 207, and 236 each coordinate pyridoxal 5'-phosphate. Residue K239 is modified to N6-(pyridoxal phosphate)lysine. Position 353 (T353) interacts with substrate.

The protein belongs to the class-II pyridoxal-phosphate-dependent aminotransferase family. BioF subfamily. As to quaternary structure, homodimer. Pyridoxal 5'-phosphate serves as cofactor.

It carries out the reaction 6-carboxyhexanoyl-[ACP] + L-alanine + H(+) = (8S)-8-amino-7-oxononanoate + holo-[ACP] + CO2. It participates in cofactor biosynthesis; biotin biosynthesis. In terms of biological role, catalyzes the decarboxylative condensation of pimeloyl-[acyl-carrier protein] and L-alanine to produce 8-amino-7-oxononanoate (AON), [acyl-carrier protein], and carbon dioxide. This chain is 8-amino-7-oxononanoate synthase, found in Hahella chejuensis (strain KCTC 2396).